A 966-amino-acid chain; its full sequence is SH3 domain-binding protein 4 (966 aa).

In terms of domain architecture, SH3 1 spans 57–116; sequence GAAREVVAIKDCCPSSFTTLKFSKGDRLYVLDSSGAEWWYAHNNTEMGYIPAAYVEPINY. The ZU5 domain maps to 322-457; it reads TNIVCRLDSS…LEPCMYVCVV (136 aa). Residues 657–727 enclose the SH3 2 domain; the sequence is NNLKFGKLIK…HAKNVLVVGK (71 aa).

Homodimer or homooligomer.

It is found in the membrane. The protein localises to the clathrin-coated pit. The protein resides in the cytoplasmic vesicle. It localises to the clathrin-coated vesicle. Its subcellular location is the nucleus. In terms of biological role, possible role in regulating endocytosis of the transferrin receptor at the plasma membrane. Alternatively, may function as a negative regulator of the amino acid-induced TOR signaling by inhibiting the formation of active Rag GTPase complexes. Preferentially binds inactive Rag GTPase complexes and prevents their interaction with the mTORC1 complex inhibiting its relocalization to lysosomes and its activation. Thereby, may indirectly regulate cell growth, proliferation and autophagy. In Seriola quinqueradiata (Five-ray yellowtail), this protein is SH3 domain-binding protein 4 (sh3bp4).